Consider the following 89-residue polypeptide: Large ribosomal subunit protein bL27 (89 aa).

Positions 1 to 26 (MATKKAGGSSKNGRDSAGRRLGLKKS) are disordered.

The protein belongs to the bacterial ribosomal protein bL27 family.

The protein is Large ribosomal subunit protein bL27 of Orientia tsutsugamushi (strain Ikeda) (Rickettsia tsutsugamushi).